The sequence spans 486 residues: Cardiolipin synthase A (486 aa).

2 consecutive transmembrane segments (helical) span residues 3–23 (TFYTVISWLAIFGYWLLIASV) and 38–58 (MAWLLIIYILPLVGIIAYLSF). PLD phosphodiesterase domains follow at residues 219 to 246 (MDLRQHRKVVLIDNFIAYTGSMNLVDPR) and 399 to 426 (EGGLLHTKSVLVDGQLSLVGTVNLDMRS). Catalysis depends on residues His-224, Lys-226, Asp-231, His-404, Lys-406, and Asp-411.

It belongs to the phospholipase D family. Cardiolipin synthase subfamily. ClsA sub-subfamily.

The protein resides in the cell inner membrane. The enzyme catalyses 2 a 1,2-diacyl-sn-glycero-3-phospho-(1'-sn-glycerol) = a cardiolipin + glycerol. Catalyzes the reversible phosphatidyl group transfer from one phosphatidylglycerol molecule to another to form cardiolipin (CL) (diphosphatidylglycerol) and glycerol. This Edwardsiella ictaluri (strain 93-146) protein is Cardiolipin synthase A.